The chain runs to 646 residues: Beta-galactosidase-1-like protein (646 aa).

Residues 1-23 (MPPDLPSLLLRLVVLLLLSQAEA) form the signal peptide. Asn-93 carries an N-linked (GlcNAc...) asparagine glycan. Glu-182 (proton donor) is an active-site residue. N-linked (GlcNAc...) asparagine glycosylation is present at Asn-239. Glu-260 acts as the Nucleophile in catalysis.

It belongs to the glycosyl hydrolase 35 family.

It is found in the secreted. Functionally, probable glycosyl hydrolase. This is Beta-galactosidase-1-like protein (Glb1l) from Mus musculus (Mouse).